The sequence spans 525 residues: Ent-kaurene oxidase (525 aa).

The chain crosses the membrane as a helical span at residues 31-51; the sequence is VHWLIYVAFGAWLCSYVIHVL. Cysteine 466 provides a ligand contact to heme.

This sequence belongs to the cytochrome P450 family. The cofactor is heme.

The protein resides in the membrane. The catalysed reaction is ent-kaur-16-ene + 3 reduced [NADPH--hemoprotein reductase] + 3 O2 = ent-kaur-16-en-19-oate + 3 oxidized [NADPH--hemoprotein reductase] + 4 H2O + 4 H(+). The protein operates within plant hormone biosynthesis; gibberellin biosynthesis. Catalyzes three successive oxidations of the 4-methyl group of ent-kaurene giving kaurenoic acid, a key step in gibberellin (GA) biosynthesis. The protein is Ent-kaurene oxidase (CYP503A1) of Gibberella intermedia (Bulb rot disease fungus).